The following is a 236-amino-acid chain: Small ribosomal subunit protein uS2c (236 aa).

The protein belongs to the universal ribosomal protein uS2 family.

It localises to the plastid. The protein localises to the chloroplast. The chain is Small ribosomal subunit protein uS2c (rps2) from Eucalyptus globulus subsp. globulus (Tasmanian blue gum).